A 315-amino-acid polypeptide reads, in one-letter code: Methionyl-tRNA formyltransferase (315 aa).

Residue 113–116 (SLLP) participates in (6S)-5,6,7,8-tetrahydrofolate binding.

This sequence belongs to the Fmt family.

The catalysed reaction is L-methionyl-tRNA(fMet) + (6R)-10-formyltetrahydrofolate = N-formyl-L-methionyl-tRNA(fMet) + (6S)-5,6,7,8-tetrahydrofolate + H(+). Attaches a formyl group to the free amino group of methionyl-tRNA(fMet). The formyl group appears to play a dual role in the initiator identity of N-formylmethionyl-tRNA by promoting its recognition by IF2 and preventing the misappropriation of this tRNA by the elongation apparatus. This is Methionyl-tRNA formyltransferase from Escherichia coli O45:K1 (strain S88 / ExPEC).